A 249-amino-acid polypeptide reads, in one-letter code: tRNA (guanine-N(1)-)-methyltransferase (249 aa).

Residues G116 and 136-141 (IGDYIL) contribute to the S-adenosyl-L-methionine site.

The protein belongs to the RNA methyltransferase TrmD family. In terms of assembly, homodimer.

Its subcellular location is the cytoplasm. It catalyses the reaction guanosine(37) in tRNA + S-adenosyl-L-methionine = N(1)-methylguanosine(37) in tRNA + S-adenosyl-L-homocysteine + H(+). Functionally, specifically methylates guanosine-37 in various tRNAs. In Zymomonas mobilis subsp. mobilis (strain ATCC 31821 / ZM4 / CP4), this protein is tRNA (guanine-N(1)-)-methyltransferase.